A 390-amino-acid polypeptide reads, in one-letter code: MLDSLLDNDFYKFTMQSAVIKRFPYARARYAFINRGEHAFPPGFGEQLREAVDAMADLSLSVEEKRFLERTCPYLDPTYLDFLSGFRYDPSEVDIVQQGERFELRIEGLWYRTILWEVPLMALISEIWYRMGDGKRDADAIIDMRTRDKIEHYKRLGLKIAEFGTRRRYSYDVHDRVVASLRHHGGDTFSGSSNVHLAMRHGVKPIGTHAHEWFMFHGARFGFKMANSLALEHWVDVYRGDLGIALTDTFTSATFFDSFDKKFAKLFDGVRHDSGDPLEFAAATIAHYERMGIDPRTKTIIFSDALTPERVERIDAFCRGRITTAFGIGTNFTNDVGVTPMNMVIKMTEARPEGQHWMPVIKLSDVPDKNTGDPDMIELAKRVLALSRRA.

At His-211 the chain carries Phosphohistidine; by autocatalysis.

Belongs to the NAPRTase family. Post-translationally, transiently phosphorylated on a His residue during the reaction cycle. Phosphorylation strongly increases the affinity for substrates and increases the rate of nicotinate D-ribonucleotide production. Dephosphorylation regenerates the low-affinity form of the enzyme, leading to product release.

It catalyses the reaction nicotinate + 5-phospho-alpha-D-ribose 1-diphosphate + ATP + H2O = nicotinate beta-D-ribonucleotide + ADP + phosphate + diphosphate. Its pathway is cofactor biosynthesis; NAD(+) biosynthesis; nicotinate D-ribonucleotide from nicotinate: step 1/1. Functionally, catalyzes the synthesis of beta-nicotinate D-ribonucleotide from nicotinate and 5-phospho-D-ribose 1-phosphate at the expense of ATP. This Chromohalobacter salexigens (strain ATCC BAA-138 / DSM 3043 / CIP 106854 / NCIMB 13768 / 1H11) protein is Nicotinate phosphoribosyltransferase.